The primary structure comprises 260 residues: Type II methyltransferase M.CviBI (260 aa).

Residues Trp-7, Lys-11, Asp-54, and Asp-177 each coordinate S-adenosyl-L-methionine.

Belongs to the N(4)/N(6)-methyltransferase family.

The catalysed reaction is a 2'-deoxyadenosine in DNA + S-adenosyl-L-methionine = an N(6)-methyl-2'-deoxyadenosine in DNA + S-adenosyl-L-homocysteine + H(+). An alpha subtype methylase, recognizes the double-stranded sequence 5'-GANTC-3', methylates A-2 on both strands, and protects the DNA from cleavage by the CviBI endonuclease. This is Type II methyltransferase M.CviBI from Paramecium bursaria Chlorella virus NC1A (PBCV-NC1A).